The following is a 408-amino-acid chain: MSWDQVWIDVNLATMDPSVSAPYGAITNAAIAVKDGKIAWLGPRSELPAFDVLSIPVYRGKGGWITPGLIDAHTHLIFAGNRANEFELRLQGASYEDIARAGGGIISTVKACREADEAELFELGRQRLNALAKEGVTTVEIKSGYGLDTETELKILRVARELGKHHHVDVKTTFLGAHAIPPEYKDNSDSYVDLIINKMLPAVIAENLADAVDVFCENIAFNLEQTERVLSAAKAAGLEIKLHAEQLTNMGGSALAARLGAKSVDHIEYLDEAGVKALSESGTCAVLLPGAFYFLRETQKPPIDLLRQYGVPMVLASDFNPGSSPICSTLLMLNMGCTLFRLTPEEALTGLTLNAAKALGIEDTVGSLVVGKQADFCLWDIATPAQLAYSYGVNPCKDVVKNGKLVHQ.

2 residues coordinate Fe(3+): His-73 and His-75. Zn(2+) contacts are provided by His-73 and His-75. Positions 82, 145, and 178 each coordinate 4-imidazolone-5-propanoate. Tyr-145 serves as a coordination point for N-formimidoyl-L-glutamate. His-243 lines the Fe(3+) pocket. Residue His-243 coordinates Zn(2+). Residue Gln-246 participates in 4-imidazolone-5-propanoate binding. Asp-318 lines the Fe(3+) pocket. Residue Asp-318 coordinates Zn(2+). N-formimidoyl-L-glutamate contacts are provided by Asn-320 and Gly-322. Residue Ser-323 participates in 4-imidazolone-5-propanoate binding.

The protein belongs to the metallo-dependent hydrolases superfamily. HutI family. Zn(2+) is required as a cofactor. Requires Fe(3+) as cofactor.

The protein resides in the cytoplasm. It carries out the reaction 4-imidazolone-5-propanoate + H2O = N-formimidoyl-L-glutamate. It functions in the pathway amino-acid degradation; L-histidine degradation into L-glutamate; N-formimidoyl-L-glutamate from L-histidine: step 3/3. Functionally, catalyzes the hydrolytic cleavage of the carbon-nitrogen bond in imidazolone-5-propanoate to yield N-formimidoyl-L-glutamate. It is the third step in the universal histidine degradation pathway. The polypeptide is Imidazolonepropionase (Shewanella putrefaciens (strain CN-32 / ATCC BAA-453)).